The chain runs to 155 residues: S-ribosylhomocysteine lyase (155 aa).

Positions 54, 58, and 122 each coordinate Fe cation.

The protein belongs to the LuxS family. As to quaternary structure, homodimer. The cofactor is Fe cation.

The enzyme catalyses S-(5-deoxy-D-ribos-5-yl)-L-homocysteine = (S)-4,5-dihydroxypentane-2,3-dione + L-homocysteine. In terms of biological role, involved in the synthesis of autoinducer 2 (AI-2) which is secreted by bacteria and is used to communicate both the cell density and the metabolic potential of the environment. The regulation of gene expression in response to changes in cell density is called quorum sensing. Catalyzes the transformation of S-ribosylhomocysteine (RHC) to homocysteine (HC) and 4,5-dihydroxy-2,3-pentadione (DPD). The sequence is that of S-ribosylhomocysteine lyase from Deinococcus deserti (strain DSM 17065 / CIP 109153 / LMG 22923 / VCD115).